The following is a 246-amino-acid chain: MFYSPLDQFEIKPLLMVNNILTLALTNYTLYLIIVVSIIFGYTSIISNGRLGSTRWGVAIIAIYDTILNLVYSQIGKAGGHFFPLIFTIFNLIFAANLISMIPYSFAISAQLVAIVSFSLALWIGNVILGLYLHGWGFFALFVPSGTPLPLVPILVLIEALSYSSRAISLGLRLGANILSGHLLMLILGSLIVNLMSSSILGFIGGIVPIVAVIAITILEVGIAIIQAYVFSILLSGYIKDSVSLH.

Positions 1 to 3 (MFY) are cleaved as a propeptide — removed in mature form. The next 7 helical transmembrane spans lie at 20 to 40 (ILTL…SIIF), 56 to 76 (WGVA…SQIG), 82 to 102 (FFPL…ISMI), 112 to 132 (LVAI…LGLY), 138 to 158 (FFAL…LVLI), 176 to 196 (ANIL…VNLM), and 203 to 223 (FIGG…EVGI).

This sequence belongs to the ATPase A chain family. In terms of assembly, F-type ATPases have 2 components, CF(1) - the catalytic core - and CF(0) - the membrane proton channel. CF(1) has five subunits: alpha(3), beta(3), gamma(1), delta(1), epsilon(1). CF(0) has three main subunits: a, b and c.

The protein localises to the mitochondrion inner membrane. Its function is as follows. Mitochondrial membrane ATP synthase (F(1)F(0) ATP synthase or Complex V) produces ATP from ADP in the presence of a proton gradient across the membrane which is generated by electron transport complexes of the respiratory chain. F-type ATPases consist of two structural domains, F(1) - containing the extramembraneous catalytic core and F(0) - containing the membrane proton channel, linked together by a central stalk and a peripheral stalk. During catalysis, ATP synthesis in the catalytic domain of F(1) is coupled via a rotary mechanism of the central stalk subunits to proton translocation. Key component of the proton channel; it may play a direct role in the translocation of protons across the membrane. This is ATP synthase subunit a (ATP6) from Candida albicans (strain SC5314 / ATCC MYA-2876) (Yeast).